The sequence spans 291 residues: Probable L-ascorbate peroxidase 4, peroxisomal (291 aa).

Catalysis depends on H40, which acts as the Proton acceptor. Residue H160 coordinates heme b. Residues T161, T177, and D184 each contribute to the K(+) site. Residues 263–283 (VLAQSAVGVAVAAAVVIVSYL) form a helical membrane-spanning segment.

This sequence belongs to the peroxidase family. Ascorbate peroxidase subfamily. Heme b is required as a cofactor. As to expression, expressed in leaves, stems and flowers.

The protein resides in the peroxisome membrane. The catalysed reaction is L-ascorbate + H2O2 = L-dehydroascorbate + 2 H2O. In terms of biological role, plays a key role in hydrogen peroxide removal. The polypeptide is Probable L-ascorbate peroxidase 4, peroxisomal (Oryza sativa subsp. japonica (Rice)).